The following is a 280-amino-acid chain: Ribosomal RNA small subunit methyltransferase A (280 aa).

Positions 28, 30, 55, 77, 103, and 122 each coordinate S-adenosyl-L-methionine.

The protein belongs to the class I-like SAM-binding methyltransferase superfamily. rRNA adenine N(6)-methyltransferase family. RsmA subfamily.

The protein resides in the cytoplasm. The catalysed reaction is adenosine(1518)/adenosine(1519) in 16S rRNA + 4 S-adenosyl-L-methionine = N(6)-dimethyladenosine(1518)/N(6)-dimethyladenosine(1519) in 16S rRNA + 4 S-adenosyl-L-homocysteine + 4 H(+). Its function is as follows. Specifically dimethylates two adjacent adenosines (A1518 and A1519) in the loop of a conserved hairpin near the 3'-end of 16S rRNA in the 30S particle. May play a critical role in biogenesis of 30S subunits. This is Ribosomal RNA small subunit methyltransferase A from Roseobacter denitrificans (strain ATCC 33942 / OCh 114) (Erythrobacter sp. (strain OCh 114)).